The primary structure comprises 93 residues: Allatostatin C (93 aa).

Residues 1–23 form the signal peptide; it reads MSSVRNIAALALVLLVLAEWSAA. Positions 24-61 are excised as a propeptide; sequence MPTTDKDKERLLNTVDLIDDDGSIETALINYLFTKQIV. Cysteines 83 and 90 form a disulfide.

It localises to the secreted. Its function is as follows. Inhibits juvenile hormone biosynthesis. The sequence is that of Allatostatin C from Camponotus floridanus (Florida carpenter ant).